Reading from the N-terminus, the 134-residue chain is UPF0412 protein YaaI (134 aa).

Residues 1–23 (MRSVLTISVGLLFGLALSSVAHA) form the signal peptide.

The protein belongs to the UPF0412 family.

In Salmonella paratyphi A (strain ATCC 9150 / SARB42), this protein is UPF0412 protein YaaI.